We begin with the raw amino-acid sequence, 122 residues long: Large ribosomal subunit protein uL29B (122 aa).

The stretch at 10–69 forms a coiled coil; it reads QLGIKQIEERAAEIKAELAALRQKKNSGDVGANDIKTAKKNLARALTVRREKILEELVEA.

It belongs to the universal ribosomal protein uL29 family. In terms of assembly, component of the large ribosomal subunit.

It localises to the cytoplasm. The sequence is that of Large ribosomal subunit protein uL29B (RPL35C) from Encephalitozoon cuniculi (strain GB-M1) (Microsporidian parasite).